We begin with the raw amino-acid sequence, 489 residues long: Phosphoenolpyruvate carboxykinase (ATP) (489 aa).

The substrate site is built by Arg53 and Tyr159. ATP contacts are provided by residues His185, 208–216, Asp258, Arg300, 409–410, and Ser415; these read GLSGTGKTT and KI. Arg300 contacts substrate.

This sequence belongs to the phosphoenolpyruvate carboxykinase (ATP) family.

Its subcellular location is the cytoplasm. The enzyme catalyses oxaloacetate + ATP = phosphoenolpyruvate + ADP + CO2. It functions in the pathway carbohydrate biosynthesis; gluconeogenesis. Functionally, involved in the gluconeogenesis. Catalyzes the conversion of oxaloacetate (OAA) to phosphoenolpyruvate (PEP) through direct phosphoryl transfer between the nucleoside triphosphate and OAA. This Aeropyrum pernix (strain ATCC 700893 / DSM 11879 / JCM 9820 / NBRC 100138 / K1) protein is Phosphoenolpyruvate carboxykinase (ATP).